We begin with the raw amino-acid sequence, 262 residues long: Small ribosomal subunit protein uS3 (262 aa).

The KH type-2 domain occupies 38-106; it reads LRKIIAKELE…KVKLNIQEIH (69 aa). Positions 211 to 262 are disordered; sequence KGQTQLPQPAVAAARPGLTVEEEERPQRKGGRGGRGANAGAARGGRGGRSRS. Over residues 243–255 the composition is skewed to gly residues; it reads GGRGANAGAARGG.

This sequence belongs to the universal ribosomal protein uS3 family. In terms of assembly, part of the 30S ribosomal subunit. Forms a tight complex with proteins S10 and S14.

In terms of biological role, binds the lower part of the 30S subunit head. Binds mRNA in the 70S ribosome, positioning it for translation. This is Small ribosomal subunit protein uS3 from Roseiflexus sp. (strain RS-1).